The primary structure comprises 164 residues: Coenzyme Q-binding protein coq10, mitochondrial (164 aa).

This sequence belongs to the COQ10 family. In terms of assembly, interacts with coenzyme Q.

It is found in the mitochondrion inner membrane. Required for the function of coenzyme Q in the respiratory chain. May serve as a chaperone or may be involved in the transport of Q6 from its site of synthesis to the catalytic sites of the respiratory complexes. The sequence is that of Coenzyme Q-binding protein coq10, mitochondrial from Schizosaccharomyces pombe (strain 972 / ATCC 24843) (Fission yeast).